Reading from the N-terminus, the 825-residue chain is Zinc finger protein 28 (825 aa).

The interval 26-65 is disordered; it reads RPGGGPAAGTVVAPGSPDRGRPRSRNSLASQDQQGAVTSG. Low complexity predominate over residues 33-42; sequence AGTVVAPGSP. Polar residues predominate over residues 51–65; sequence NSLASQDQQGAVTSG. The 72-residue stretch at 103-174 folds into the KRAB domain; that stretch reads VTFGDVAVVF…KRKMRKGQHL (72 aa). 14 C2H2-type zinc fingers span residues 377-399, 405-427, 433-456, 462-484, 490-512, 518-540, 546-568, 574-596, 602-624, 630-652, 658-680, 686-708, 714-736, and 742-764; these read FQCNECKKTFTQSSSLTVHQRIH, YKCNQCGKAFSDGSSFARHQRCH, YECPECGKAFIQNTSLVRHWRYYH, FDCIDCGKAFSDHIGLNQHRRIH, YTCEVCHKSFRYGSSLTVHQRIH, YECEICRKAFSHHASLTQHQRVH, FKCKECGKAFRQNIHLASHWRIH, FECGECGKSFSISSQLATHQRIH, YECKVCRKAFTQKAHLAQHQKTH, YECKECGKAFSQTTHLIQHQRVH, YKCLECGKAFGDNSSCTQHRRLH, YECVECGKTFKTKSSLICHRRCH, YECSACGKAFSHRQSLSVHQRIH, and YECKECRKTFIQIGHLNQHKRVH. The segment at 770 to 792 adopts a C2H2-type 15; degenerate zinc-finger fold; it reads YNYKKGRRAFRQTAHFAHHQQIH.

It belongs to the krueppel C2H2-type zinc-finger protein family. Expressed predominantly in ovary.

It localises to the nucleus. Its function is as follows. May be involved in transcriptional regulation. May have a role in embryonic development. The protein is Zinc finger protein 28 (Zfp28) of Mus musculus (Mouse).